The chain runs to 65 residues: UPF0434 protein CPS_2127 (65 aa).

Belongs to the UPF0434 family.

This chain is UPF0434 protein CPS_2127, found in Colwellia psychrerythraea (strain 34H / ATCC BAA-681) (Vibrio psychroerythus).